The sequence spans 549 residues: Probable protein kinase UbiB (549 aa).

Residues 123–501 (DFDETPLASA…QQQAHKSNYL (379 aa)) form the Protein kinase domain. ATP is bound by residues 129 to 137 (LASASISQV) and Lys-152. Asp-287 serves as the catalytic Proton acceptor. 2 helical membrane passes run 498–518 (SNYL…LFNQ) and 520–540 (ATLW…IIGW).

It belongs to the ABC1 family. UbiB subfamily.

It localises to the cell inner membrane. The protein operates within cofactor biosynthesis; ubiquinone biosynthesis [regulation]. Its function is as follows. Is probably a protein kinase regulator of UbiI activity which is involved in aerobic coenzyme Q (ubiquinone) biosynthesis. In Shewanella sp. (strain ANA-3), this protein is Probable protein kinase UbiB.